The primary structure comprises 239 residues: mRNA turnover protein 4 homolog (239 aa).

Residues 216–239 (QQMDDDLPESAPESEGESEEEDDS) are disordered. Residues 218–239 (MDDDLPESAPESEGESEEEDDS) show a composition bias toward acidic residues. Phosphoserine occurs at positions 225, 229, and 233.

The protein belongs to the universal ribosomal protein uL10 family. As to quaternary structure, associates with the pre-60S ribosomal particle. Interacts with MINAS-60 (product of an alternative open reading frame of RBM10).

It localises to the nucleus. The protein localises to the nucleolus. Its subcellular location is the cytoplasm. Its function is as follows. Component of the ribosome assembly machinery. Nuclear paralog of the ribosomal protein P0, it binds pre-60S subunits at an early stage of assembly in the nucleolus, and is replaced by P0 in cytoplasmic pre-60S subunits and mature 80S ribosomes. The sequence is that of mRNA turnover protein 4 homolog (Mrto4) from Mus musculus (Mouse).